Here is a 129-residue protein sequence, read N- to C-terminus: Large ribosomal subunit protein uL22 (129 aa).

Belongs to the universal ribosomal protein uL22 family. In terms of assembly, part of the 50S ribosomal subunit.

Functionally, this protein binds specifically to 23S rRNA; its binding is stimulated by other ribosomal proteins, e.g. L4, L17, and L20. It is important during the early stages of 50S assembly. It makes multiple contacts with different domains of the 23S rRNA in the assembled 50S subunit and ribosome. Its function is as follows. The globular domain of the protein is located near the polypeptide exit tunnel on the outside of the subunit, while an extended beta-hairpin is found that lines the wall of the exit tunnel in the center of the 70S ribosome. This chain is Large ribosomal subunit protein uL22, found in Prochlorococcus marinus (strain MIT 9211).